The sequence spans 344 residues: Cell adhesion molecule CEACAM6 (344 aa).

The N-terminal stretch at 1-34 is a signal peptide; it reads MGPPSAPPCRLHVPWKEVLLTASLLTFWNPPTTA. The region spanning 35-142 is the Ig-like V-type domain; it reads KLTIESTPFN…EATGQFHVYP (108 aa). N-linked (GlcNAc...) asparagine glycosylation is found at Asn-104, Asn-111, Asn-115, Asn-152, Asn-173, Asn-197, Asn-224, Asn-256, Asn-274, Asn-288, Asn-292, and Asn-309. Ig-like C2-type domains follow at residues 145-232 and 240-314; these read PKPS…VTLN and PTIS…TTVT. Cys-167 and Cys-215 are disulfide-bonded. Cys-259 and Cys-299 form a disulfide bridge. Gly-320 carries the GPI-anchor amidated glycine lipid modification. A propeptide spans 321 to 344 (removed in mature form); the sequence is SAPVLSAVATVGITIGVLARVALI.

Belongs to the immunoglobulin superfamily. CEA family. As to quaternary structure, homodimer; homodimerizes via its Ig-like V-type domain. Heterodimer with CEACAM8; heterodimerizes via its Ig-like V-type domain. Post-translationally, glycosylated. As to expression, expressed in neutrophils. Expressed in columnar epithelial and goblet cells of the colon. Expressed in numerous tumor cell lines (at protein level).

It localises to the cell membrane. The protein resides in the apical cell membrane. The protein localises to the cell surface. In terms of biological role, cell surface glycoprotein that plays a role in cell adhesion and tumor progression. Intercellular adhesion occurs in a calcium- and fibronectin-independent manner. Mediates homophilic and heterophilic cell adhesion with other carcinoembryonic antigen-related cell adhesion molecules, such as CEACAM5 and CEACAM8. Heterophilic interaction with CEACAM8 occurs in activated neutrophils. Plays a role in neutrophil adhesion to cytokine-activated endothelial cells. Plays a role in cell migration and cell adhesion to endothelial cells. The chain is Cell adhesion molecule CEACAM6 from Homo sapiens (Human).